The following is a 424-amino-acid chain: L-glutamine:2-deoxy-scyllo-inosose aminotransferase (424 aa).

Lys-202 bears the N6-(pyridoxal phosphate)lysine mark.

This sequence belongs to the DegT/DnrJ/EryC1 family. L-glutamine:2-deoxy-scyllo-inosose/scyllo-inosose aminotransferase subfamily. Pyridoxal 5'-phosphate serves as cofactor.

The enzyme catalyses 2-deoxy-L-scyllo-inosose + L-glutamine = 2-deoxy-scyllo-inosamine + 2-oxoglutaramate. It carries out the reaction 3-amino-2,3-dideoxy-scyllo-inosose + L-glutamine = 2-deoxystreptamine + 2-oxoglutaramate. It functions in the pathway metabolic intermediate biosynthesis; 2-deoxystreptamine biosynthesis; 2-deoxystreptamine from D-glucose 6-phosphate: step 2/4. It participates in metabolic intermediate biosynthesis; 2-deoxystreptamine biosynthesis; 2-deoxystreptamine from D-glucose 6-phosphate: step 4/4. The protein operates within antibiotic biosynthesis; ribostamycin biosynthesis. Its function is as follows. Catalyzes the PLP-dependent transamination of 2-deoxy-scyllo-inosose (2-DOI) to form 2-deoxy-scyllo-inosamine (2-DOIA) using L-glutamine as the amino donor. Also catalyzes the transamination of 3-amino-2,3-dideoxy-scyllo-inosose (keto-2-DOIA) into 2-deoxystreptamine (2-DOS). This chain is L-glutamine:2-deoxy-scyllo-inosose aminotransferase (rbmB), found in Streptomyces ribosidificus.